We begin with the raw amino-acid sequence, 175 residues long: Cytochrome c homolog (175 aa).

The Cytoplasmic segment spans residues 1–8 (MTGKELNK). The helical; Signal-anchor transmembrane segment at 9 to 29 (IVAAILFASLIAMIVRFVANI) threads the bilayer. Topologically, residues 30–175 (LYKPNLQVLN…LFLKNYVHDK (146 aa)) are periplasmic. Residues Cys-84, Cys-87, His-88, and Met-150 each coordinate heme c.

It belongs to the cytochrome c family. Binds 1 heme c group covalently per subunit.

The protein resides in the cell membrane. Functionally, may be involved in electron transfer from bc1 complex to aa3. In Rickettsia typhi (strain ATCC VR-144 / Wilmington), this protein is Cytochrome c homolog (cycM).